The primary structure comprises 259 residues: Ubiquinone/menaquinone biosynthesis C-methyltransferase UbiE (259 aa).

Residues threonine 82, aspartate 103, and 131 to 132 contribute to the S-adenosyl-L-methionine site; that span reads NA.

It belongs to the class I-like SAM-binding methyltransferase superfamily. MenG/UbiE family.

It carries out the reaction a 2-demethylmenaquinol + S-adenosyl-L-methionine = a menaquinol + S-adenosyl-L-homocysteine + H(+). It catalyses the reaction a 2-methoxy-6-(all-trans-polyprenyl)benzene-1,4-diol + S-adenosyl-L-methionine = a 5-methoxy-2-methyl-3-(all-trans-polyprenyl)benzene-1,4-diol + S-adenosyl-L-homocysteine + H(+). It functions in the pathway quinol/quinone metabolism; menaquinone biosynthesis; menaquinol from 1,4-dihydroxy-2-naphthoate: step 2/2. Its pathway is cofactor biosynthesis; ubiquinone biosynthesis. In terms of biological role, methyltransferase required for the conversion of demethylmenaquinol (DMKH2) to menaquinol (MKH2) and the conversion of 2-polyprenyl-6-methoxy-1,4-benzoquinol (DDMQH2) to 2-polyprenyl-3-methyl-6-methoxy-1,4-benzoquinol (DMQH2). This Agrobacterium fabrum (strain C58 / ATCC 33970) (Agrobacterium tumefaciens (strain C58)) protein is Ubiquinone/menaquinone biosynthesis C-methyltransferase UbiE.